The following is a 306-amino-acid chain: Protein pxr1 (306 aa).

The segment covering 1–11 (MGLAAPRKRTK) has biased composition (basic residues). Disordered stretches follow at residues 1 to 27 (MGLA…STSG) and 148 to 241 (AQKE…SDIP). Positions 15–27 (DPNNTNWSRSTSG) are enriched in polar residues. In terms of domain architecture, G-patch spans 25–79 (TSGYGHKIMSSQGWTPGSFLGARNAAHADMFTAASASHIRVVVKDDTLGLGARSK). The segment covering 182 to 191 (NTLKALREEQ) has biased composition (basic and acidic residues). Residues 219–228 (KKERKTKKRK) are compositionally biased toward basic residues.

This sequence belongs to the PINX1 family.

The protein resides in the nucleus. It is found in the nucleolus. Its function is as follows. Involved in rRNA-processing at A0, A1 and A2 sites and negatively regulates telomerase. The sequence is that of Protein pxr1 (pxr1) from Aspergillus oryzae (strain ATCC 42149 / RIB 40) (Yellow koji mold).